The chain runs to 248 residues: Triosephosphate isomerase (248 aa).

9-11 serves as a coordination point for substrate; that stretch reads NWK. The active-site Electrophile is the H94. E166 functions as the Proton acceptor in the catalytic mechanism. Substrate-binding positions include G172, S212, and 233–234; that span reads GG.

It belongs to the triosephosphate isomerase family. As to quaternary structure, homodimer.

The protein localises to the cytoplasm. The catalysed reaction is D-glyceraldehyde 3-phosphate = dihydroxyacetone phosphate. It participates in carbohydrate biosynthesis; gluconeogenesis. The protein operates within carbohydrate degradation; glycolysis; D-glyceraldehyde 3-phosphate from glycerone phosphate: step 1/1. Involved in the gluconeogenesis. Catalyzes stereospecifically the conversion of dihydroxyacetone phosphate (DHAP) to D-glyceraldehyde-3-phosphate (G3P). The protein is Triosephosphate isomerase of Thermoanaerobacter sp. (strain X514).